Reading from the N-terminus, the 228-residue chain is 2-C-methyl-D-erythritol 4-phosphate cytidylyltransferase (228 aa).

It belongs to the IspD/TarI cytidylyltransferase family. IspD subfamily.

The enzyme catalyses 2-C-methyl-D-erythritol 4-phosphate + CTP + H(+) = 4-CDP-2-C-methyl-D-erythritol + diphosphate. It participates in isoprenoid biosynthesis; isopentenyl diphosphate biosynthesis via DXP pathway; isopentenyl diphosphate from 1-deoxy-D-xylulose 5-phosphate: step 2/6. Its function is as follows. Catalyzes the formation of 4-diphosphocytidyl-2-C-methyl-D-erythritol from CTP and 2-C-methyl-D-erythritol 4-phosphate (MEP). The sequence is that of 2-C-methyl-D-erythritol 4-phosphate cytidylyltransferase from Halalkalibacterium halodurans (strain ATCC BAA-125 / DSM 18197 / FERM 7344 / JCM 9153 / C-125) (Bacillus halodurans).